The chain runs to 396 residues: Gap junction gamma-1 protein (396 aa).

Topologically, residues 1-22 (MSWSFLTRLLEEIHNHSTFVGK) are cytoplasmic. Residues 23 to 45 (IWLTVLIVFRIVLTAVGGESIYY) traverse the membrane as a helical segment. The Extracellular segment spans residues 46-75 (DEQSKFVCNTEQPGCENVCYDAFAPLSHVR). A helical membrane pass occupies residues 76-95 (FWVFQIILVATPSVMYLGYA). At 96–175 (IHKIAKMEHG…RRIREDGLMK (80 aa)) the chain is on the cytoplasmic side. Residues 146–165 (LESEKENKDQNQSKPKHDGR) form a disordered region. The segment covering 147–156 (ESEKENKDQN) has biased composition (basic and acidic residues). A helical membrane pass occupies residues 176–198 (IYVLQLLARTVFEVGFLVGQYFL). Residues 199–228 (YGFQVHPFYVCSRLPCPHKIDCFISRPTEK) are Extracellular-facing. Residues 229–248 (TIFLLIMYGVTGLCLLLNIW) form a helical membrane-spanning segment. Topologically, residues 249 to 396 (EMLHLGFGTI…SGDGKTSVWI (148 aa)) are cytoplasmic. A disordered region spans residues 356-396 (YNHQNNPHGSREKKAKVGSKAGSNKSSASSKSGDGKTSVWI). The span at 373–396 (GSKAGSNKSSASSKSGDGKTSVWI) shows a compositional bias: low complexity.

This sequence belongs to the connexin family. Gamma-type subfamily. As to quaternary structure, a connexon is composed of a hexamer of connexins. Interacts with CNST.

It is found in the cell membrane. It localises to the cell junction. Its subcellular location is the gap junction. Its function is as follows. One gap junction consists of a cluster of closely packed pairs of transmembrane channels, the connexons, through which materials of low MW diffuse from one cell to a neighboring cell. This is Gap junction gamma-1 protein (GJC1) from Bos taurus (Bovine).